Consider the following 371-residue polypeptide: Protein-tyrosine sulfotransferase 2 (371 aa).

Over 1-8 (MRVTMRRV) the chain is Cytoplasmic. A helical; Signal-anchor for type II membrane protein membrane pass occupies residues 9–25 (LLAVGSVVALMVTLHLG). The Lumenal segment spans residues 26–371 (QQVLECQHVL…QVTQNTSSSH (346 aa)). 76-80 (RSGTT) provides a ligand contact to 3'-phosphoadenylyl sulfate. A disulfide bridge links Cys94 with Cys154. Catalysis depends on Glu97, which acts as the Proton donor/acceptor. Residues 99 to 103 (RIIPR) are interaction with peptide substrate. 3'-phosphoadenylyl sulfate contacts are provided by Arg181, Ser189, and Arg193. Residues Cys223 and Cys231 are joined by a disulfide bond. Residues Tyr236, 283–292 (STDQVIKPVN), and Lys298 contribute to the 3'-phosphoadenylyl sulfate site. N-linked (GlcNAc...) asparagine glycosylation is found at Asn341 and Asn366.

This sequence belongs to the protein sulfotransferase family.

It localises to the golgi apparatus membrane. It catalyses the reaction L-tyrosyl-[protein] + 3'-phosphoadenylyl sulfate = O-sulfo-L-tyrosine-[protein] + adenosine 3',5'-bisphosphate + H(+). Functionally, catalyzes the O-sulfation of tyrosine residues within acidic motifs of polypeptides, using 3'-phosphoadenylyl sulfate (PAPS) as cosubstrate. The polypeptide is Protein-tyrosine sulfotransferase 2 (TPST2) (Gallus gallus (Chicken)).